Reading from the N-terminus, the 113-residue chain is Large ribosomal subunit protein uL24 (113 aa).

Belongs to the universal ribosomal protein uL24 family. Part of the 50S ribosomal subunit.

Its function is as follows. One of two assembly initiator proteins, it binds directly to the 5'-end of the 23S rRNA, where it nucleates assembly of the 50S subunit. One of the proteins that surrounds the polypeptide exit tunnel on the outside of the subunit. This chain is Large ribosomal subunit protein uL24, found in Synechococcus sp. (strain RCC307).